The chain runs to 562 residues: MPQSQRPLYIPYAGPSLLETPLLNKGSAFSKEERGSFNLTGLLPPRFESIDEQAERAFRQYSCFQTNINKHIYLRAIHDNNETLFFKLVQNNLAEMMPIIYTPTVGDACEQFSDIYRSSRGLFISYEDRFNIDDMLRNATKNKVKVIVVTDGERILGLGDQGIGGMGIPIGKLSLYTACGGISPAHTLPVMLDVGTNNQKLLDDPMYMGARHKRIDQDSYDEFLELFISAVKRRWPNVLLQFEDFAQPNAMPLLQRYKDRICCFNDDIQGTASVTVGTLLAACRSKGSKLSELNVAFVGAGSAGCGIAEQIISQMMNEGLGAEQARSQVFMVDRFGLLTQGMGELRDFQQKLVQSNEAIAEWDIAGEFASLVEVMHGAKPDILIGVSGQAGLFTEKVITAMKSHCEMPIIFPLSNPSRQVEATPSQVINWTQGQVIIATGSPFDPIEYQGKTFPIAQCNNSYIFPGVGLAVVAANISRITDGMLQVASETLAAASPLANGESDELLPPLTSIAQLSRDIAFAIAKVAYKQGLALELTDDELLAKIEHNFWKPEYRQYRRTSL.

The active-site Proton donor is tyrosine 101. Residue arginine 154 participates in NAD(+) binding. The Proton acceptor role is filled by lysine 172. Positions 243, 244, and 267 each coordinate a divalent metal cation. Residues aspartate 267 and asparagine 415 each contribute to the NAD(+) site.

Belongs to the malic enzymes family. Homotetramer. The cofactor is Mg(2+). Requires Mn(2+) as cofactor.

It carries out the reaction (S)-malate + NAD(+) = pyruvate + CO2 + NADH. It catalyses the reaction oxaloacetate + H(+) = pyruvate + CO2. This chain is NAD-dependent malic enzyme, found in Colwellia psychrerythraea (strain 34H / ATCC BAA-681) (Vibrio psychroerythus).